A 219-amino-acid chain; its full sequence is Probable octanoyltransferase (219 aa).

In terms of domain architecture, BPL/LPL catalytic spans 43–219; the sequence is QPPKPTIITS…NNLDSFLMSK (177 aa). Substrate contacts are provided by residues 83-90, 151-153, and 164-166; these read RGGQTTFH, AIG, and GLA. Cysteine 182 acts as the Acyl-thioester intermediate in catalysis.

This sequence belongs to the LipB family.

It carries out the reaction octanoyl-[ACP] + L-lysyl-[protein] = N(6)-octanoyl-L-lysyl-[protein] + holo-[ACP] + H(+). It participates in protein modification; protein lipoylation via endogenous pathway; protein N(6)-(lipoyl)lysine from octanoyl-[acyl-carrier-protein]: step 1/2. Functionally, catalyzes the transfer of endogenously produced octanoic acid from octanoyl-acyl-carrier-protein onto the lipoyl domains of lipoate-dependent enzymes. Lipoyl-ACP can also act as a substrate although octanoyl-ACP is likely to be the physiological substrate. The chain is Probable octanoyltransferase from Schizosaccharomyces pombe (strain 972 / ATCC 24843) (Fission yeast).